Here is a 1323-residue protein sequence, read N- to C-terminus: Nck-associated protein 5-like (1323 aa).

Disordered stretches follow at residues 1–22, 113–142, 156–175, 204–238, 260–314, and 341–714; these read MDQP…DSME, QIPL…TSLP, QQLR…ALDA, PATP…PWAP, PGEE…DTLL, and GATG…EQPE. The segment at 1–135 is mediates interaction with CDK5RAP2 and is required for homodimerization and microtubule bundle formation; the sequence is MDQPAGGTGK…PTSPAPNVSE (135 aa). A coiled-coil region spans residues 22–109; that stretch reads ELSTCQELLH…LQQKLQLTAN (88 aa). Pro residues-rich tracts occupy residues 162-172 and 226-236; these read GPGPPATPPPA and CGPPQPEPSPW. Over residues 271–298 the composition is skewed to low complexity; that stretch reads ASSRAPPSAQGPSSGPHCAPGSSSSSSS. Pro residues predominate over residues 353 to 364; sequence PGKPNSPDPGPP. 4 positions are modified to phosphoserine; by CDK1: serine 436, serine 447, serine 466, and serine 473. A (S/T)X(I/L)P motif 1 motif is present at residues 480–483; sequence SRIP. Phosphoserine is present on residues serine 489, serine 492, and serine 494. Polar residues predominate over residues 531–542; it reads LRPSQSTVSTAL. Residue serine 573 is modified to Phosphoserine; by CDK1. Over residues 647-660 the composition is skewed to basic and acidic residues; the sequence is RPGDPSHTPLRDRL. Threonine 654 carries the post-translational modification Phosphothreonine. The segment at 743 to 1136 is mediates interaction with beta-tubulin and is required for microtubule bundle formation; the sequence is RVYSSHSMGA…SGTPSKNLPK (394 aa). Serine 760 bears the Phosphoserine; by CDK1 mark. Disordered stretches follow at residues 778 to 875, 892 to 948, 979 to 1003, and 1027 to 1323; these read ALCP…HSAI, GQER…EVKT, AYLS…GQAQ, and KELP…GSQG. Residues 799–817 show a composition bias toward low complexity; that stretch reads KPKSPHSSPTKLPSKSPTK. The (S/T)X(I/L)P motif 2 motif lies at 808-811; sequence TKLP. The short motif at 918 to 921 is the (S/T)X(I/L)P motif 3; required for interaction with MAPRE1 element; it reads SKLP. Over residues 925–934 the composition is skewed to basic and acidic residues; that stretch reads RRTEATKNKD. Residues 942–985 adopt a coiled-coil conformation; it reads LRKEVKTEARKLEAESLNISKLMAKAEDLRRALEEEKAYLSRAR. Residues 1027–1041 show a composition bias toward basic and acidic residues; the sequence is KELPPKSWREPKPEY. 2 stretches are compositionally biased toward polar residues: residues 1097-1112 and 1124-1136; these read VSTT…TRTL and HSSS…NLPK. A compositionally biased stretch (pro residues) spans 1143 to 1153; sequence DPPPGAPPARP. Serine 1184 bears the Phosphoserine mark. 2 stretches are compositionally biased toward polar residues: residues 1225–1237 and 1264–1273; these read TFPN…SSSD and VDPSRTSTPQ. Over residues 1302–1323 the composition is skewed to low complexity; the sequence is LETSESLSDSLYDSLSSCGSQG.

Homodimer. Interacts with CDK5RAP2. Interacts with MAPRE1. Interacts with beta-tubulin. CDK1/Cyclin B-dependent phosphorylation mediates its dissociation from centrosomes during mitosis.

Its subcellular location is the cytoplasm. The protein localises to the cytoskeleton. It localises to the microtubule organizing center. The protein resides in the centrosome. Regulates microtubule organization and stabilization. Promotes microtubule growth and bundling formation and stabilizes microtubules by increasing intense acetylation of microtubules. Both tubulin-binding and homodimer formation are required for NCKAP5L-mediated microtubule bundle formation. The chain is Nck-associated protein 5-like (Nckap5l) from Mus musculus (Mouse).